The chain runs to 428 residues: Chaperone SurA (428 aa).

Positions 1-20 (MKNWKTLLLGIAMIANTSFA) are cleaved as a signal peptide. PpiC domains are found at residues 171–272 (STEL…KVND) and 282–382 (VTEV…ELLD).

The protein resides in the periplasm. The enzyme catalyses [protein]-peptidylproline (omega=180) = [protein]-peptidylproline (omega=0). Chaperone involved in the correct folding and assembly of outer membrane proteins. Recognizes specific patterns of aromatic residues and the orientation of their side chains, which are found more frequently in integral outer membrane proteins. May act in both early periplasmic and late outer membrane-associated steps of protein maturation. The polypeptide is Chaperone SurA (Salmonella choleraesuis (strain SC-B67)).